We begin with the raw amino-acid sequence, 209 residues long: Large ribosomal subunit protein uL3 (209 aa).

The protein belongs to the universal ribosomal protein uL3 family. As to quaternary structure, part of the 50S ribosomal subunit. Forms a cluster with proteins L14 and L19.

One of the primary rRNA binding proteins, it binds directly near the 3'-end of the 23S rRNA, where it nucleates assembly of the 50S subunit. The chain is Large ribosomal subunit protein uL3 from Lactiplantibacillus plantarum (strain ATCC BAA-793 / NCIMB 8826 / WCFS1) (Lactobacillus plantarum).